Consider the following 455-residue polypeptide: Tryptophan dimethylallyltransferase (455 aa).

L-tryptophan contacts are provided by residues 79–80 (VL) and E88. R99, K186, and Y188 together coordinate substrate. Positions 190 and 256 each coordinate L-tryptophan. 7 residues coordinate substrate: R269, K271, Y273, Q355, Y357, Y421, and Y425.

It belongs to the tryptophan dimethylallyltransferase family. Homodimer.

The enzyme catalyses L-tryptophan + dimethylallyl diphosphate = 4-(3-methylbut-2-enyl)-L-tryptophan + diphosphate. Its pathway is alkaloid biosynthesis; ergot alkaloid biosynthesis. In terms of biological role, tryptophan dimethylallyltransferase; part of the gene cluster that mediates the biosynthesis of fungal ergot alkaloid. DmaW catalyzes the first step of ergot alkaloid biosynthesis by condensing dimethylallyl diphosphate (DMAP) and tryptophan to form 4-dimethylallyl-L-tryptophan. The second step is catalyzed by the methyltransferase easF that methylates 4-dimethylallyl-L-tryptophan in the presence of S-adenosyl-L-methionine, resulting in the formation of 4-dimethylallyl-L-abrine. The catalase easC and the FAD-dependent oxidoreductase easE then transform 4-dimethylallyl-L-abrine to chanoclavine-I which is further oxidized by easD in the presence of NAD(+), resulting in the formation of chanoclavine-I aldehyde. Agroclavine dehydrogenase easG then mediates the conversion of chanoclavine-I aldehyde to agroclavine via a non-enzymatic adduct reaction: the substrate is an iminium intermediate that is formed spontaneously from chanoclavine-I aldehyde in the presence of glutathione. Further conversion of agroclavine to paspalic acid is a two-step process involving oxidation of agroclavine to elymoclavine and of elymoclavine to paspalic acid, the second step being performed by the elymoclavine oxidase cloA. However, cloA does not encode a functional enzyme indicating that C.fusiformis terminates its ergot alkaloid pathway at elymoclavine. This chain is Tryptophan dimethylallyltransferase, found in Claviceps fusiformis (Ergot fungus).